The chain runs to 94 residues: MNKGELVDAVAEKASVTKKQADAVLTAALETIIEAVSSGDKVTLVGFGSFESRERKAREGRNPKTNEKMEIPATRVPAFSAGKLFREKVAPPKA.

This sequence belongs to the bacterial histone-like protein family. In terms of assembly, homodimer.

Its function is as follows. Histone-like DNA-binding protein which is capable of wrapping DNA to stabilize it, and thus to prevent its denaturation under extreme environmental conditions. It is essential for heterocyst differentiation. This chain is DNA-binding protein HU (hup), found in Nostoc sp. (strain PCC 7120 / SAG 25.82 / UTEX 2576).